Consider the following 540-residue polypeptide: Light-independent protochlorophyllide reductase subunit B (540 aa).

Aspartate 36 is a binding site for [4Fe-4S] cluster. The active-site Proton donor is aspartate 292. Residue 428-429 (GL) coordinates substrate. The interval 451–490 (SNVASGVEPSTPSVSSEVSASSSASPEASAPTPSPDGDMV) is disordered. Residues 457–481 (VEPSTPSVSSEVSASSSASPEASAP) show a composition bias toward low complexity.

The protein belongs to the ChlB/BchB/BchZ family. In terms of assembly, protochlorophyllide reductase is composed of three subunits; BchL, BchN and BchB. Forms a heterotetramer of two BchB and two BchN subunits. [4Fe-4S] cluster serves as cofactor.

The catalysed reaction is chlorophyllide a + oxidized 2[4Fe-4S]-[ferredoxin] + 2 ADP + 2 phosphate = protochlorophyllide a + reduced 2[4Fe-4S]-[ferredoxin] + 2 ATP + 2 H2O. It functions in the pathway porphyrin-containing compound metabolism; bacteriochlorophyll biosynthesis (light-independent). In terms of biological role, component of the dark-operative protochlorophyllide reductase (DPOR) that uses Mg-ATP and reduced ferredoxin to reduce ring D of protochlorophyllide (Pchlide) to form chlorophyllide a (Chlide). This reaction is light-independent. The NB-protein (BchN-BchB) is the catalytic component of the complex. The chain is Light-independent protochlorophyllide reductase subunit B from Chlorobium chlorochromatii (strain CaD3).